The chain runs to 629 residues: 1-deoxy-D-xylulose-5-phosphate synthase (629 aa).

Residues His72 and Gly113–Ala115 contribute to the thiamine diphosphate site. Position 144 (Asp144) interacts with Mg(2+). Thiamine diphosphate is bound by residues Gly145–Ala146, Asn174, Tyr287, and Glu370. Asn174 lines the Mg(2+) pocket.

Belongs to the transketolase family. DXPS subfamily. Homodimer. Mg(2+) serves as cofactor. The cofactor is thiamine diphosphate.

It catalyses the reaction D-glyceraldehyde 3-phosphate + pyruvate + H(+) = 1-deoxy-D-xylulose 5-phosphate + CO2. Its pathway is metabolic intermediate biosynthesis; 1-deoxy-D-xylulose 5-phosphate biosynthesis; 1-deoxy-D-xylulose 5-phosphate from D-glyceraldehyde 3-phosphate and pyruvate: step 1/1. In terms of biological role, catalyzes the acyloin condensation reaction between C atoms 2 and 3 of pyruvate and glyceraldehyde 3-phosphate to yield 1-deoxy-D-xylulose-5-phosphate (DXP). This Prochlorococcus marinus (strain MIT 9215) protein is 1-deoxy-D-xylulose-5-phosphate synthase.